We begin with the raw amino-acid sequence, 186 residues long: Ribosome-recycling factor (186 aa).

The protein belongs to the RRF family.

The protein resides in the cytoplasm. Its function is as follows. Responsible for the release of ribosomes from messenger RNA at the termination of protein biosynthesis. May increase the efficiency of translation by recycling ribosomes from one round of translation to another. The protein is Ribosome-recycling factor of Rickettsia typhi (strain ATCC VR-144 / Wilmington).